Here is a 640-residue protein sequence, read N- to C-terminus: Protein ALTERED PHOSPHATE STARVATION RESPONSE 1 (640 aa).

Residues 60 to 175 (TPLHLHHNPP…ATPQASSVVS (116 aa)) form a disordered region. Pro residues predominate over residues 68–87 (PPSPSPPPPPPPRPPPPPLS). The segment covering 88–103 (PGSETTTWTTTTTSSV) has biased composition (low complexity). Pro residues predominate over residues 104–118 (LPPPPPPPPPPPPPS). The segment covering 144 to 173 (TTATRTATGTGSDAAVTTAPTTATPQASSV) has biased composition (low complexity). A coiled-coil region spans residues 336–371 (KTEKAKKDVEKLESQLSVSSQAIQSASNEIIKLRET).

In terms of tissue distribution, expressed in the root tip of primary and lateral roots, specifically in the meristematic region, including the quiescent center and lateral root cap cells.

The protein resides in the nucleus. In terms of biological role, required for the coordination of cell differentiation and cell elongation in the root tip. Required for the coordination of cell processes necessary for correct root growth in response to phosphate starvation, through the modulation of the auxin transporter protein PIN7. The polypeptide is Protein ALTERED PHOSPHATE STARVATION RESPONSE 1 (Arabidopsis thaliana (Mouse-ear cress)).